The chain runs to 471 residues: Pneumolysin (471 aa).

Beta stranded transmembrane passes span 158-171 (MEQLKVKFGSDFEK), 178-187 (IDFNSVHSGE), 256-265 (SDEVEAAFEA), and 273-285 (APQTEWKQILDNT). A Conserved undecapeptide motif is present at residues 427-437 (ECTGLAWEWWR). Positions 459–460 (TL) match the Cholesterol binding motif.

Belongs to the cholesterol-dependent cytolysin family. In terms of assembly, homooligomeric pore complex of 35 to 50 subunits; when inserted in the host membrane. Has a slightly altered apparent molecular weight in a secA2 deletion mutant, but no post-translational modifications have been found.

The protein resides in the secreted. It is found in the cell wall. Its subcellular location is the host cell membrane. A cholesterol-dependent toxin that causes cytolysis by forming pores in cholesterol containing host membranes. After binding to target membranes, the protein undergoes a major conformation change, leading to its insertion in the host membrane and formation of an oligomeric pore complex. Cholesterol is required for binding to host membranes, membrane insertion and pore formation; cholesterol binding is mediated by a Thr-Leu pair in the C-terminus. Can be reversibly inactivated by oxidation. The sequence is that of Pneumolysin (ply) from Streptococcus pneumoniae serotype 4 (strain ATCC BAA-334 / TIGR4).